The primary structure comprises 239 residues: Small ribosomal subunit protein uS2 (239 aa).

Belongs to the universal ribosomal protein uS2 family.

The sequence is that of Small ribosomal subunit protein uS2 from Francisella tularensis subsp. novicida (strain U112).